A 34-amino-acid polypeptide reads, in one-letter code: Mu-theraphotoxin-Df1a (34 aa).

3 disulfides stabilise this stretch: Cys2–Cys16, Cys9–Cys21, and Cys15–Cys28. Phenylalanine amide is present on Phe34.

It belongs to the neurotoxin 10 (Hwtx-1) family. 54 (ProTx-1) subfamily. In terms of processing, C-terminal amidation is important for the high potency of the toxin. Expressed by the venom gland.

The protein resides in the secreted. Its function is as follows. Inhibits sodium channel Nav1.7/SCN9A with high potency (IC(50)=117 nM) and Nav1.2/SCN2A, Nav1.3/SCN3A, Nav1.6/SCN8A and Nav1.5/SCN5 with weaker potency. Also inhibits voltage-gated calcium channel Cav3.1/CACNA1G, Cav3.2/CACNA1H and Cav3.3/CACNA1I. This chain is Mu-theraphotoxin-Df1a, found in Davus fasciatus (Costa Rican tiger rump).